The primary structure comprises 397 residues: MLFTNARIVTLRDDQDYGLIEEGAIATDGDQIAWVGPSADVPDAYRSETTHDLGGRLVTPALIDCHTHVVFGGNRATEFELRLNGASYEEVARAGGGIVSTVTATRGASEAALLADALTRVDALIAEGVTLIEVKSGYGLDRDTELKMLRVARQIASARPVDVRTSFLGAHAVPPEFKGNPDAYIDDICIPTLHAAHAEGLVDAVDGFCEGIAFDTAQISRVFDVAGELGLPIKLHAEQLSNIGGTQLAARYGALSADHVEYATDADAQALAKSGTVAVVLPGAFYTLRETQVPPIASFRKHAVRMALATDCNPGSSPLTSPLLAMNMACTLFRMTPLEALLGMTAHAAAALGEQDRGRIMAGARADLCVWNAQHPSELAYRIGFNPLHQRIFKGAI.

Positions 66 and 68 each coordinate Fe(3+). His-66 and His-68 together coordinate Zn(2+). Positions 75, 138, and 171 each coordinate 4-imidazolone-5-propanoate. N-formimidoyl-L-glutamate is bound at residue Tyr-138. Residue His-236 coordinates Fe(3+). His-236 contributes to the Zn(2+) binding site. A 4-imidazolone-5-propanoate-binding site is contributed by Gln-239. Fe(3+) is bound at residue Asp-311. Zn(2+) is bound at residue Asp-311. 2 residues coordinate N-formimidoyl-L-glutamate: Asn-313 and Gly-315. Ser-316 provides a ligand contact to 4-imidazolone-5-propanoate.

Belongs to the metallo-dependent hydrolases superfamily. HutI family. Zn(2+) serves as cofactor. It depends on Fe(3+) as a cofactor.

The protein resides in the cytoplasm. It catalyses the reaction 4-imidazolone-5-propanoate + H2O = N-formimidoyl-L-glutamate. Its pathway is amino-acid degradation; L-histidine degradation into L-glutamate; N-formimidoyl-L-glutamate from L-histidine: step 3/3. In terms of biological role, catalyzes the hydrolytic cleavage of the carbon-nitrogen bond in imidazolone-5-propanoate to yield N-formimidoyl-L-glutamate. It is the third step in the universal histidine degradation pathway. This Roseobacter denitrificans (strain ATCC 33942 / OCh 114) (Erythrobacter sp. (strain OCh 114)) protein is Imidazolonepropionase.